The chain runs to 1448 residues: DNA-directed RNA polymerase subunit beta' (1448 aa).

Residues Cys-66, Cys-68, Cys-81, and Cys-84 each contribute to the Zn(2+) site. Residues Asp-474, Asp-476, and Asp-478 each coordinate Mg(2+). Positions 814, 888, 895, and 898 each coordinate Zn(2+). Residues 1408–1448 form a disordered region; it reads LEELQAAIGGDGESPSGDGAAGDGAPSEEDVEQIEASGSEN.

The protein belongs to the RNA polymerase beta' chain family. In terms of assembly, the RNAP catalytic core consists of 2 alpha, 1 beta, 1 beta' and 1 omega subunit. When a sigma factor is associated with the core the holoenzyme is formed, which can initiate transcription. Mg(2+) is required as a cofactor. It depends on Zn(2+) as a cofactor.

It catalyses the reaction RNA(n) + a ribonucleoside 5'-triphosphate = RNA(n+1) + diphosphate. Its function is as follows. DNA-dependent RNA polymerase catalyzes the transcription of DNA into RNA using the four ribonucleoside triphosphates as substrates. The protein is DNA-directed RNA polymerase subunit beta' of Salinibacter ruber (strain DSM 13855 / M31).